The following is a 1336-amino-acid chain: MAGPQMGGSAEDHPPRKRHAAEKQKKKTVIYTKCFEFESATQRPIDRQRYDENEDLSDVEEIVSVRGFSLEEKLRSQLYQGDFVHAMEGKDFNYEYVQREALRVPLIFREKDGLGIKMPDPDFTVRDVKLLVGSRRLVDVMDVNTQKGTEMSMSQFVRYYETPEAQRDKLYNVISLEFSHTKLEHLVKRPTVVDLVDWVDNMWPQHLKEKQTEATNAIAEMKYPKVKKYCLMSVKGCFTDFHIDFGGTSVWYHVFRGGKIFWLIPPTLHNLALYEEWVLSGKQSDIFLGDRVERCQRIELKQGYTFFIPSGWIHAVYTPVDSLVFGGNILHSFNVPMQLRIYEIEDRTRVQPKFRYPFYYEMCWYVLERYVYCVTQRSHLTQEYQRESMLIDAPRKPSIDGFSSDSWLEMEEEACDQQPQEEEEKDEEGEGRDRAPKPPTDGSTSPTSTPSEDQEALGKKPKAPALRFLKRTLSNESEESVKSTTLAVDYPKTPTGSPATEVSAKWTHLTEFELKGLKALVEKLESLPENKKCVPEGIEDPQALLEGVKNVLKEHADDDPSLAITGVPVVTWPKKTPKNRAVGRPKGKLGPASAVKLAANRTTAGARRRRTRCRKCEACLRTECGECHFCKDMKKFGGPGRMKQSCIMRQCIAPVLPHTAVCLVCGEAGKEDTVEEEEGKFNLMLMECSICNEIIHPGCLKIKESEGVVNDELPNCWECPKCNHAGKTGKQKRGPGFKYASNLPGSLLKEQKMNRDNKEGQEPAKRRSECEEAPRRRSDEHSKKVPPDGLLRRKSDDVHLRKKRKYEKPQELSGRKRASSLQTSPGSSSHLSPRPPLGSSLSPWWRSSLTYFQQQLKPGKEDKLFRKKRRSWKNAEDRMALANKPLRRFKQEPEDELPEAPPKTRESDHSRSSSPTAGPSTEGAEGPEEKKKVKMRRKRRLPNKELSRELSKELNHEIQRTENSLANENQQPIKSEPESEGEEPKRPPGICERPHRFSKGLNGTPRELRHQLGPSLRSPPRVISRPPPSVSPPKCIQMERHVIRPPPISPPPDSLPLDDGAAHVMHREVWMAVFSYLSHQDLCVCMRVCRTWNRWCCDKRLWTRIDLNHCKSITPLMLSGIIRRQPVSLDLSWTNISKKQLSWLINRLPGLRDLVLSGCSWIAVSALCSSSCPLLRTLDVQWVEGLKDAQMRDLLSPPTDNRPGQMDNRSKLRNIVELRLAGLDITDASLRLIIRHMPLLSKLHLSYCNHVTDQSINLLTAVGTTTRDSLTEINLSDCNKVTDQCLSFFKRCGNICHIDLRYCKQVTKEGCEQFIAEMSVSVQFGQVEEKLLQKLS.

The interval 1 to 25 is disordered; the sequence is MAGPQMGGSAEDHPPRKRHAAEKQK. Residues 15-25 are compositionally biased toward basic residues; sequence PRKRHAAEKQK. Phosphoserine is present on S57. Residues 178 to 346 enclose the JmjC domain; that stretch reads FSHTKLEHLV…MQLRIYEIED (169 aa). T239 is a substrate binding site. Residues H242 and D244 each contribute to the Fe cation site. Residue K259 coordinates substrate. H314 provides a ligand contact to Fe cation. Residues 410–430 show a composition bias toward acidic residues; it reads MEEEACDQQPQEEEEKDEEGE. Residues 410-465 form a disordered region; sequence MEEEACDQQPQEEEEKDEEGEGRDRAPKPPTDGSTSPTSTPSEDQEALGKKPKAPA. Residues 440–451 are compositionally biased toward low complexity; that stretch reads TDGSTSPTSTPS. S474 and S477 each carry phosphoserine. The residue at position 493 (T493) is a Phosphothreonine. S497 bears the Phosphoserine mark. The CXXC-type zinc finger occupies 606–652; it reads ARRRRTRCRKCEACLRTECGECHFCKDMKKFGGPGRMKQSCIMRQCI. Zn(2+) is bound by residues C613, C616, C619, C624, C627, C630, C646, C651, C662, C665, C688, C691, H696, C699, C719, and C722. The segment at 659-725 adopts a PHD-type zinc-finger fold; that stretch reads TAVCLVCGEA…CWECPKCNHA (67 aa). Disordered regions lie at residues 727–843 and 855–1034; these read KTGK…SLSP and QLKP…SPPK. Residues 749 to 799 show a composition bias toward basic and acidic residues; sequence KEQKMNRDNKEGQEPAKRRSECEEAPRRRSDEHSKKVPPDGLLRRKSDDVH. Residues 819–843 are compositionally biased toward low complexity; sequence SSLQTSPGSSSHLSPRPPLGSSLSP. Residues K857 and K890 each participate in a glycyl lysine isopeptide (Lys-Gly) (interchain with G-Cter in SUMO2) cross-link. Over residues 902-911 the composition is skewed to basic and acidic residues; the sequence is PKTRESDHSR. Residues 932-941 show a composition bias toward basic residues; the sequence is KVKMRRKRRL. Over residues 942 to 960 the composition is skewed to basic and acidic residues; it reads PNKELSRELSKELNHEIQR. Positions 943–971 form a coiled coil; the sequence is NKELSRELSKELNHEIQRTENSLANENQQ. S951 is modified (phosphoserine). Residues 961-971 show a composition bias toward polar residues; it reads TENSLANENQQ. S975, S979, S1018, and S1031 each carry phosphoserine. Low complexity predominate over residues 1014 to 1024; the sequence is PSLRSPPRVIS. Residues 1059–1105 form the F-box domain; the sequence is DGAAHVMHREVWMAVFSYLSHQDLCVCMRVCRTWNRWCCDKRLWTRI. LRR repeat units lie at residues 1093 to 1120, 1133 to 1154, 1156 to 1182, 1222 to 1247, 1248 to 1277, 1278 to 1302, and 1303 to 1336; these read NRWC…MLSG, WTNI…LRDL, LSGC…DVQW, GLDI…HLSY, CNHV…NLSD, CNKV…DLRY, and CKQV…QKLS.

The protein belongs to the JHDM1 histone demethylase family. Interacts with SKP1, forming heterodimers. The heterodimeric KDM2B-SKP1 complex interacts with the PCGF1-BCORL1 heterodimeric complex to form a homotetrameric polycomb repression complex 1 (PRC1.1). Directly interacts with CUL1. The SKP1-KDM2B complex interacts with UBB. Requires Fe(2+) as cofactor.

Its subcellular location is the nucleus. The protein localises to the nucleolus. The protein resides in the chromosome. It catalyses the reaction N(6),N(6)-dimethyl-L-lysyl(36)-[histone H3] + 2 2-oxoglutarate + 2 O2 = L-lysyl(36)-[histone H3] + 2 formaldehyde + 2 succinate + 2 CO2. Histone demethylase activity is inhibited by fumarate. Histone demethylase that demethylates 'Lys-4' and 'Lys-36' of histone H3, thereby playing a central role in histone code. Preferentially demethylates trimethylated H3 'Lys-4' and dimethylated H3 'Lys-36' residue while it has weak or no activity for mono- and tri-methylated H3 'Lys-36'. Preferentially binds the transcribed region of ribosomal RNA and represses the transcription of ribosomal RNA genes which inhibits cell growth and proliferation. May also serve as a substrate-recognition component of the SCF (SKP1-CUL1-F-box protein)-type E3 ubiquitin ligase complex. The chain is Lysine-specific demethylase 2B (KDM2B) from Homo sapiens (Human).